We begin with the raw amino-acid sequence, 361 residues long: Innexin inx1 (361 aa).

Residues 1 to 28 lie on the Cytoplasmic side of the membrane; the sequence is MYKLLGGLKEYLKWQDIVTDNAIFRLHN. A helical transmembrane segment spans residues 29–49; it reads LFTTVLLLTCSLIITATQYVG. Residues 50–109 are Extracellular-facing; the sequence is NPIHCIVNGLPVRPINTYCWITSTFTMPDAFLRQVGSEVAHPGVANDFGDEDAKKYYTYY. Residues 110 to 130 form a helical membrane-spanning segment; sequence QWVCFVLFFQAMLCYTPKWIW. The Cytoplasmic portion of the chain corresponds to 131-181; sequence DSIEGGLLRTLIMGLNRGLCQDDEKCMKKKALIEYLLRHIKRHNMYALKYW. A helical membrane pass occupies residues 182–202; sequence FCETLCLVNIIGQLYLMNHFF. Over 203-267 the chain is Extracellular; sequence DGEFFSYGLR…LPLNIVNEKT (65 aa). A helical transmembrane segment spans residues 268 to 288; the sequence is YIFLWFWYIILAALLSVLVVY. Residues 289-361 are Cytoplasmic-facing; that stretch reads RAVILAVPSV…KIETPSSNNP (73 aa).

It belongs to the pannexin family. In terms of tissue distribution, expressed in embryonic neural precursors including the dorsal median neuroblast, glial cells, neuropilar glial ring, developing myoblasts cells and in a circumferential band of epithelial cells at the trochanter/coxa boundary stripe in the developing limb.

The protein resides in the cell membrane. The protein localises to the cell junction. It localises to the gap junction. Its function is as follows. Structural components of the gap junctions. This Schistocerca americana (American grasshopper) protein is Innexin inx1 (inx1).